Consider the following 182-residue polypeptide: Translation initiation factor IF-3 (182 aa).

It belongs to the IF-3 family. Monomer.

It localises to the cytoplasm. IF-3 binds to the 30S ribosomal subunit and shifts the equilibrium between 70S ribosomes and their 50S and 30S subunits in favor of the free subunits, thus enhancing the availability of 30S subunits on which protein synthesis initiation begins. The protein is Translation initiation factor IF-3 of Thermosynechococcus vestitus (strain NIES-2133 / IAM M-273 / BP-1).